The sequence spans 392 residues: p21-activated protein kinase-interacting protein 1 (392 aa).

WD repeat units lie at residues 40-77, 80-118, 121-160, 202-240, and 243-284; these read AHTASLSAVAVNSRFVVTGSKDETIHIYDMKKKVDHGA, HHNGTITCLKFHGNRHLISGAEDGLICVWDARRWECLKS, AHKGHVTFLSIHPSGRLALSVGTDKTLRTWNLVEGRSAFI, TNERRVSSVTFLSESVLTVAGDEEVVRFFDCDSLTCLSE, and AHEN…KVSP. A disordered region spans residues 309–392; the sequence is TKESPPAAAE…RKKKKIRMMQ (84 aa). A compositionally biased stretch (basic and acidic residues) spans 325-351; it reads EQSRRNKEESGHAVQEEEKQPKPDTEK. Positions 355-368 are enriched in polar residues; it reads TGDSNKPTRGNSLV. Positions 381 to 392 are enriched in basic residues; the sequence is KKRKKKKIRMMQ.

In terms of assembly, interacts with PAK1.

It localises to the nucleus. It is found in the nucleolus. Its function is as follows. Negatively regulates the PAK1 kinase. PAK1 is a member of the PAK kinase family, which has been shown to play a positive role in the regulation of signaling pathways involving MAPK8 and RELA. PAK1 exists as an inactive homodimer, which is activated by binding of small GTPases such as CDC42 to an N-terminal regulatory domain. PAK1IP1 also binds to the N-terminus of PAK1, and inhibits the specific activation of PAK1 by CDC42. May be involved in ribosomal large subunit assembly. The protein is p21-activated protein kinase-interacting protein 1 (PAK1IP1) of Bos taurus (Bovine).